Here is a 59-residue protein sequence, read N- to C-terminus: Movement protein TGBp3 (59 aa).

Residues 1–3 lie on the Lumenal side of the membrane; that stretch reads MHL. Residues 4-21 form a helical membrane-spanning segment; that stretch reads AIVGALTLVLTLFVLHYT. At 22-59 the chain is on the cytoplasmic side; that stretch reads TKDDRCYILINGHSAFTNCPASPDLAKVISQLKPHNHG.

It belongs to the Tymovirales TGBp3 protein family.

It is found in the host endoplasmic reticulum membrane. Its function is as follows. Plays a role in viral cell-to-cell propagation, by facilitating genome transport to neighboring plant cells through plasmosdesmata. May induce the formation of granular vesicles derived from the Endoplasmic reticulum, which align on actin filaments. This is Movement protein TGBp3 from Chenopodium album (Fat hen).